Consider the following 320-residue polypeptide: Phosphoribosylaminoimidazole-succinocarboxamide synthase (320 aa).

Residues 283 to 303 (ESDWDRNSPPPPLPESIAHQT) form a disordered region.

The protein belongs to the SAICAR synthetase family.

The enzyme catalyses 5-amino-1-(5-phospho-D-ribosyl)imidazole-4-carboxylate + L-aspartate + ATP = (2S)-2-[5-amino-1-(5-phospho-beta-D-ribosyl)imidazole-4-carboxamido]succinate + ADP + phosphate + 2 H(+). The protein operates within purine metabolism; IMP biosynthesis via de novo pathway; 5-amino-1-(5-phospho-D-ribosyl)imidazole-4-carboxamide from 5-amino-1-(5-phospho-D-ribosyl)imidazole-4-carboxylate: step 1/2. The sequence is that of Phosphoribosylaminoimidazole-succinocarboxamide synthase from Rhodopirellula baltica (strain DSM 10527 / NCIMB 13988 / SH1).